Here is a 900-residue protein sequence, read N- to C-terminus: Peroxisomal hydratase-dehydrogenase-epimerase (900 aa).

2 short-chain dehydrogenase like regions span residues 6 to 230 and 319 to 535; these read SFKD…THES and SLCN…ASEE. 6 residues coordinate NADP(+): Ile-14, Lys-53, Asn-100, Arg-133, Tyr-165, and Lys-169. Catalysis depends on Tyr-165, which acts as the Proton donor. Lys-169 serves as the catalytic Lowers pKa of active site Tyr. Positions 689, 690, 719, 803, 805, 826, 851, and 852 each coordinate (3R)-3-hydroxydecanoyl-CoA. The region spanning 775–887 is the MaoC-like domain; it reads EVPHGKVPDF…DTTRNVIVLD (113 aa). Residues 898-900 carry the Microbody targeting signal motif; sequence SKL.

The protein belongs to the short-chain dehydrogenases/reductases (SDR) family. Monomer.

The protein localises to the peroxisome. It catalyses the reaction a (3R)-3-hydroxyacyl-CoA = a (2E)-enoyl-CoA + H2O. The enzyme catalyses a (3R)-3-hydroxyacyl-CoA + NAD(+) = a 3-oxoacyl-CoA + NADH + H(+). Its pathway is lipid metabolism; fatty acid beta-oxidation. Functionally, second trifunctional enzyme acting on the beta-oxidation pathway for fatty acids, possessing hydratase-dehydrogenase-epimerase activities. Converts trans-2-enoyl-CoA via D-3-hydroxyacyl-CoA to 3-ketoacyl-CoA. The chain is Peroxisomal hydratase-dehydrogenase-epimerase (FOX2) from Saccharomyces cerevisiae (strain ATCC 204508 / S288c) (Baker's yeast).